A 208-amino-acid chain; its full sequence is MNATTIIGIAGGSGSGKTSVTNEILHNLEGHSVALIAQDYYYKDQSHLTFEERLKTNYDHPFAFDNDLLIQNLMDLRNGIPVEVPTYDYVNHTRSAETIAFQPKDVIIVEGIFALENKTLRDLMDVKIYVDTDADLRILRRLMRDTKERGRSMESVIEQYLNVVRPMHNQFIEPTKRYADIIIPEGGSNKVAIDIMTTKIQSLINNQQ.

11-18 (GGSGSGKT) contacts ATP.

It belongs to the uridine kinase family.

The protein localises to the cytoplasm. It catalyses the reaction uridine + ATP = UMP + ADP + H(+). The enzyme catalyses cytidine + ATP = CMP + ADP + H(+). The protein operates within pyrimidine metabolism; CTP biosynthesis via salvage pathway; CTP from cytidine: step 1/3. It functions in the pathway pyrimidine metabolism; UMP biosynthesis via salvage pathway; UMP from uridine: step 1/1. This chain is Uridine kinase, found in Staphylococcus carnosus (strain TM300).